A 177-amino-acid chain; its full sequence is Thymidine kinase (177 aa).

11–18 (GPMFSGKS) contacts ATP. The active-site Proton acceptor is glutamate 83. Residue phenylalanine 113 coordinates substrate. Zn(2+) contacts are provided by cysteine 138 and cysteine 141. A substrate-binding site is contributed by 157 to 161 (IEIIG). Zn(2+) contacts are provided by cysteine 170 and cysteine 173.

Belongs to the thymidine kinase family. In terms of assembly, homotetramer. Two molecules of substrate bind to each enzyme tetramer.

The enzyme catalyses thymidine + ATP = dTMP + ADP + H(+). Functionally, phosphorylates thymidine and thymidine analogs, such as azidothymidine (AZT). Part of the salvage pathway for pyrimidine deoxyribonucleotide synthesis. In Variola virus, this protein is Thymidine kinase (OPG101).